Reading from the N-terminus, the 336-residue chain is Ketol-acid reductoisomerase (NADP(+)) 1 (336 aa).

The KARI N-terminal Rossmann domain maps to 2-181; sequence AKVYYEKDVT…GATRAGVLET (180 aa). Residues 25–28, Arg-48, Ser-52, and 82–85 each bind NADP(+); these read YGSQ and DELQ. His-107 is a catalytic residue. Residue Gly-133 participates in NADP(+) binding. One can recognise a KARI C-terminal knotted domain in the interval 182–327; sequence TFKEETETDL…RKLREMMPFV (146 aa). Mg(2+) is bound by residues Asp-190, Glu-194, Glu-226, and Glu-230. Ser-251 contacts substrate.

It belongs to the ketol-acid reductoisomerase family. Mg(2+) serves as cofactor.

It catalyses the reaction (2R)-2,3-dihydroxy-3-methylbutanoate + NADP(+) = (2S)-2-acetolactate + NADPH + H(+). The enzyme catalyses (2R,3R)-2,3-dihydroxy-3-methylpentanoate + NADP(+) = (S)-2-ethyl-2-hydroxy-3-oxobutanoate + NADPH + H(+). The protein operates within amino-acid biosynthesis; L-isoleucine biosynthesis; L-isoleucine from 2-oxobutanoate: step 2/4. Its pathway is amino-acid biosynthesis; L-valine biosynthesis; L-valine from pyruvate: step 2/4. Its function is as follows. Involved in the biosynthesis of branched-chain amino acids (BCAA). Catalyzes an alkyl-migration followed by a ketol-acid reduction of (S)-2-acetolactate (S2AL) to yield (R)-2,3-dihydroxy-isovalerate. In the isomerase reaction, S2AL is rearranged via a Mg-dependent methyl migration to produce 3-hydroxy-3-methyl-2-ketobutyrate (HMKB). In the reductase reaction, this 2-ketoacid undergoes a metal-dependent reduction by NADPH to yield (R)-2,3-dihydroxy-isovalerate. The sequence is that of Ketol-acid reductoisomerase (NADP(+)) 1 from Bacillus thuringiensis subsp. konkukian (strain 97-27).